Consider the following 473-residue polypeptide: 3-isopropylmalate dehydratase large subunit (473 aa).

3 residues coordinate [4Fe-4S] cluster: Cys354, Cys414, and Cys417.

It belongs to the aconitase/IPM isomerase family. LeuC type 1 subfamily. As to quaternary structure, heterodimer of LeuC and LeuD. Requires [4Fe-4S] cluster as cofactor.

It carries out the reaction (2R,3S)-3-isopropylmalate = (2S)-2-isopropylmalate. It functions in the pathway amino-acid biosynthesis; L-leucine biosynthesis; L-leucine from 3-methyl-2-oxobutanoate: step 2/4. In terms of biological role, catalyzes the isomerization between 2-isopropylmalate and 3-isopropylmalate, via the formation of 2-isopropylmaleate. In Mycobacterium ulcerans (strain Agy99), this protein is 3-isopropylmalate dehydratase large subunit.